Consider the following 256-residue polypeptide: Ubiquinone/menaquinone biosynthesis C-methyltransferase UbiE (256 aa).

S-adenosyl-L-methionine-binding positions include threonine 79, aspartate 100, and 128–129 (DA).

Belongs to the class I-like SAM-binding methyltransferase superfamily. MenG/UbiE family.

It carries out the reaction a 2-demethylmenaquinol + S-adenosyl-L-methionine = a menaquinol + S-adenosyl-L-homocysteine + H(+). The enzyme catalyses a 2-methoxy-6-(all-trans-polyprenyl)benzene-1,4-diol + S-adenosyl-L-methionine = a 5-methoxy-2-methyl-3-(all-trans-polyprenyl)benzene-1,4-diol + S-adenosyl-L-homocysteine + H(+). The protein operates within quinol/quinone metabolism; menaquinone biosynthesis; menaquinol from 1,4-dihydroxy-2-naphthoate: step 2/2. It functions in the pathway cofactor biosynthesis; ubiquinone biosynthesis. In terms of biological role, methyltransferase required for the conversion of demethylmenaquinol (DMKH2) to menaquinol (MKH2) and the conversion of 2-polyprenyl-6-methoxy-1,4-benzoquinol (DDMQH2) to 2-polyprenyl-3-methyl-6-methoxy-1,4-benzoquinol (DMQH2). This is Ubiquinone/menaquinone biosynthesis C-methyltransferase UbiE from Pseudomonas fluorescens (strain Pf0-1).